Reading from the N-terminus, the 4249-residue chain is Fibrocystin-L (4249 aa).

A signal peptide spans 1-20 (MGHLWLSGTWFLFGLLWCAA). Residues 21-4222 (DSHKGSSETI…TPVQTLAVIT (4202 aa)) lie on the Extracellular side of the membrane. IPT/TIG domains lie at 31-132 (PKVT…GVAS), 146-255 (PTIR…KMTY), 270-361 (PEVV…ILEY), 1067-1153 (PLIL…HFIY), 1155-1234 (SQIS…SFSY), 1240-1323 (PVVT…KLNA), 1329-1468 (LEVI…SFSY), 1565-1648 (PSII…TLTK), 1658-1742 (PNID…SFSY), 1748-1827 (PYVT…NLTI), 1830-1909 (PAVA…SFTY), 1915-1996 (PFLK…AFEY), 1998-2084 (LSIQ…LFTY), and 2090-2175 (PLIT…DFLY). Positions 337-492 (PGGRGLKVEV…NVFTEQQTGD (156 aa)) constitute a PA14 domain. Residues T1297 and T1359 are each glycosylated (O-linked (GalNAc...) threonine). O-linked (GalNAc...) threonine glycosylation is present at T1838. The 121-residue stretch at 2183 to 2303 (SSWGGSPPPE…IPVVWTRLTH (121 aa)) folds into the G8 1 domain. 5 PbH1 repeats span residues 2484 to 2506 (QFKSYVKGCAIHQSYNRAITIHN), 2507 to 2529 (THHLLVERNIIYDIKGGAFFIED), 2565 to 2587 (NPNNTIRHNAAAGGTHFGFWYRM), 2664 to 2686 (GGALQFHNFVMVNNNEAGIETKR), and 2732 to 2755 (SQGLTVSSVHFMNFDRHACVALGV). The G8 2 domain occupies 3035–3173 (SFWQSSPENN…HSVYKTKLLE (139 aa)). 5 PbH1 repeats span residues 3292–3314 (KGNARISNVEFHHSGQEGYRDST), 3354–3376 (TDGVDIDDNIIYFTVGEGIRIWG), 3415–3437 (GTNTVLQNNVVAGFGRVGYRIDG), 3470–3492 (PGCSLIQGFTIWTCWDYGIYFQT), and 3493–3514 (TESVHIYNVTLVNNGMSIFSMV). An O-linked (GalNAc...) threonine glycan is attached at T3735. The disordered stretch occupies residues 4183–4208 (LSAQSVPGGSGSSPGSGSSSSGHSKA). Residues 4197-4208 (GSGSSSSGHSKA) show a composition bias toward low complexity. The helical transmembrane segment at 4223 to 4243 (ACLVGRLLLLEVFMAAVFILN) threads the bilayer. Topologically, residues 4244-4249 (TTVGIN) are cytoplasmic.

As to expression, expressed in neurons in the hippocampus and the cerebral cortex (at protein level). Transiently expressed at high levels in inner ear hair cells, predominantly in outer hair cells, during early postnatal development (at protein level).

The protein localises to the membrane. It localises to the cell projection. The protein resides in the stereocilium membrane. Functionally, component of hair-cell stereocilia coat. Required for normal hearing. The sequence is that of Fibrocystin-L (Pkhd1l1) from Mus musculus (Mouse).